The chain runs to 325 residues: Diacylglycerol acyltransferase/mycolyltransferase Ag85B (325 aa).

Residues 1 to 38 (MTFIDKIRGHWARRMTVAAVAALLLPGLVGVVGGSATA) form the signal peptide. 82-83 (LR) is a substrate binding site. The segment at 98–108 (FEMFLDSGLSV) is fibronectin-binding. A disulfide bridge links Cys127 with Cys132. Ser166 provides a ligand contact to substrate. The active-site Nucleophile is Ser166. Glu272 is a catalytic residue. Residues 274-277 (LTIR) and 304-306 (HNW) contribute to the substrate site. The active site involves His304.

This sequence belongs to the mycobacterial A85 antigen family.

It is found in the secreted. It catalyses the reaction 2 alpha,alpha'-trehalose 6-mycolate = alpha,alpha'-trehalose 6,6'-bismycolate + alpha,alpha-trehalose. The enzyme catalyses an acyl-CoA + a 1,2-diacyl-sn-glycerol = a triacyl-sn-glycerol + CoA. Functionally, the antigen 85 proteins (FbpA, FbpB, FbpC) are responsible for the high affinity of mycobacteria for fibronectin, a large adhesive glycoprotein. They also help to maintain the integrity of the cell wall by catalyzing the transfer of mycolic acids to cell wall arabinogalactan and through the synthesis of alpha,alpha-trehalose dimycolate (TDM, cord factor). They catalyze the transfer of a mycoloyl residue from one molecule of alpha,alpha-trehalose monomycolate (TMM) to another TMM, leading to the formation of TDM. The chain is Diacylglycerol acyltransferase/mycolyltransferase Ag85B (fbpB) from Mycolicibacterium smegmatis (strain ATCC 700084 / mc(2)155) (Mycobacterium smegmatis).